A 123-amino-acid chain; its full sequence is Histone H1-like protein HC1 (123 aa).

Residues I54 to K123 form a disordered region. The segment covering L61–K75 has biased composition (basic residues). Residues K85–P102 show a composition bias toward low complexity. Residues A103–K123 are compositionally biased toward basic residues.

The protein belongs to the histone H1/H5 family. HCT subfamily.

In terms of biological role, might have a role analogous to that of eukaryotic histone proteins. The protein is Histone H1-like protein HC1 (hctA) of Chlamydia pneumoniae (Chlamydophila pneumoniae).